The sequence spans 173 residues: Catabolic 3-dehydroquinase (173 aa).

The Proton acceptor role is filled by tyrosine 26. Residues asparagine 102, histidine 108, and aspartate 115 each coordinate substrate. The Proton donor role is filled by histidine 128. Substrate-binding positions include 129–130 (VS) and arginine 139.

This sequence belongs to the type-II 3-dehydroquinase family. As to quaternary structure, homododecamer. Adopts a ring-like structure, composed of an arrangement of two hexameric rings stacked on top of one another.

It catalyses the reaction 3-dehydroquinate = 3-dehydroshikimate + H2O. It functions in the pathway aromatic compound metabolism; 3,4-dihydroxybenzoate biosynthesis; 3,4-dihydroxybenzoate from 3-dehydroquinate: step 1/2. In terms of biological role, 3-dehydroquinate dehydratase; part of the qa gene cluster that mediates the catabolism of quinic acid (QA) and as such, allows the use of QA as a sole carbon source. Catalyzes the second reaction in the inducible quinic acid catabolic pathway by converting 3-dehydroquinate into 3-dehydroshikimate. The qa cluster encodes 3 inducible enymes (qa-2, qa-3 and qa-4) catalyzing the first three reactions in the catabolism of quinic acid to protocatechuic acid (also known as 3,4-Dihydroxybenzoic acid). The chain is Catabolic 3-dehydroquinase from Neurospora crassa (strain ATCC 24698 / 74-OR23-1A / CBS 708.71 / DSM 1257 / FGSC 987).